The sequence spans 178 residues: Ribosome maturation factor RimP (178 aa).

It belongs to the RimP family.

It is found in the cytoplasm. Its function is as follows. Required for maturation of 30S ribosomal subunits. The chain is Ribosome maturation factor RimP from Mycolicibacterium paratuberculosis (strain ATCC BAA-968 / K-10) (Mycobacterium paratuberculosis).